A 315-amino-acid chain; its full sequence is Olfactory receptor 8J3 (315 aa).

At 1-25 the chain is on the extracellular side; it reads MAPENFTRVTEFILTGVSSCPELQI. Residue N5 is glycosylated (N-linked (GlcNAc...) asparagine). A helical transmembrane segment spans residues 26 to 46; the sequence is PLFLVFLVLYVLTMAGNLGII. Over 47-54 the chain is Cytoplasmic; that stretch reads TLTSVDSR. Residues 55 to 75 traverse the membrane as a helical segment; sequence LQNPMYFFLRHLAIINLGNST. The Extracellular segment spans residues 76 to 99; it reads VIAPKMLMNFLVKKKTTSFYECAT. A disulfide bridge links C97 with C189. Residues 100–120 form a helical membrane-spanning segment; that stretch reads QLGGFLFFIVSEVMMLAVMAY. The Cytoplasmic portion of the chain corresponds to 121–139; the sequence is DRYVAICNPLLYMVVVSRR. The chain crosses the membrane as a helical span at residues 140-160; that stretch reads LCLLLVSLTYLYGFSTAIVVS. Topologically, residues 161–197 are extracellular; that stretch reads PCIFSVSYCSSNIINHFYCDIAPLLALSCSDTYIPET. A helical membrane pass occupies residues 198-217; sequence IVFISAATNLVFSMITVLVS. Residues 218-237 lie on the Cytoplasmic side of the membrane; sequence YFNIVLSILRIRSPEGRKKA. A helical membrane pass occupies residues 238-258; that stretch reads FSTCASHMIAVTVFYGTMLFM. Residues 259 to 271 lie on the Extracellular side of the membrane; the sequence is YLQPQTNHSLDTD. N265 carries an N-linked (GlcNAc...) asparagine glycan. The chain crosses the membrane as a helical span at residues 272-292; that stretch reads KMASVFYTLVIPMLNPLIYSL. Over 293–315 the chain is Cytoplasmic; the sequence is RNNDVNVALKKFMENPCYSFKSM.

The protein belongs to the G-protein coupled receptor 1 family.

Its subcellular location is the cell membrane. In terms of biological role, odorant receptor. The polypeptide is Olfactory receptor 8J3 (OR8J3) (Homo sapiens (Human)).